The primary structure comprises 185 residues: Protein LPA2 (185 aa).

The N-terminal 46 residues, 1 to 46 (MALQIHSPCSFSTRPYHLFFTTRNPRFAIKCQNSQIESDTTEDPSR), are a transit peptide targeting the chloroplast. Positions 35 to 105 (QIESDTTEDP…VFMSEEGAAK (71 aa)) are disordered. Over residues 47–75 (SKNSSSSGVGFGSPASSSSPAKKLSAATS) the composition is skewed to low complexity. Over residues 83–92 (KREVNRRAPV) the composition is skewed to basic and acidic residues. The next 2 helical transmembrane spans lie at 115 to 135 (AFLL…IILA) and 152 to 172 (VYPV…AYGV).

The protein resides in the plastid. The protein localises to the chloroplast membrane. The chain is Protein LPA2 from Arabidopsis thaliana (Mouse-ear cress).